Here is a 73-residue protein sequence, read N- to C-terminus: Beta-defensin 39 (73 aa).

Residues 1–23 form the signal peptide; that stretch reads MKISCFLLLVLSLSCFQINSVSG. Cystine bridges form between Cys29-Cys58, Cys36-Cys51, and Cys41-Cys59.

It belongs to the beta-defensin family.

It localises to the secreted. Has antibacterial activity. The polypeptide is Beta-defensin 39 (Defb39) (Rattus norvegicus (Rat)).